Reading from the N-terminus, the 389-residue chain is Chalcone synthase H2 (389 aa).

Residue Cys164 is part of the active site.

It belongs to the thiolase-like superfamily. Chalcone/stilbene synthases family.

It localises to the cytoplasm. The enzyme catalyses (E)-4-coumaroyl-CoA + 3 malonyl-CoA + 3 H(+) = 2',4,4',6'-tetrahydroxychalcone + 3 CO2 + 4 CoA. Its pathway is secondary metabolite biosynthesis; flavonoid biosynthesis. Functionally, involved in the biosynthesis of prenylated phenolics natural products which contribute to the bitter taste of beer and display broad biological activities. Chalcone synthase that can use 4-coumaroyl-CoA to produce 4,2',4',6'-tetrahydroxychalcone (also termed naringenin-chalcone or chalcone) which can, under specific conditions, spontaneously isomerize into naringenin. The polypeptide is Chalcone synthase H2 (Humulus lupulus (European hop)).